Reading from the N-terminus, the 497-residue chain is Ammonium transporter 1 (497 aa).

The Extracellular portion of the chain corresponds to 1–32 (MSSTTDATPTPSGVNGGDSMTVNLNQFYNNGD). Residues 33–53 (VAWILTSTALVFIMIPGVGFF) form a helical membrane-spanning segment. Topologically, residues 54-63 (YSGLARRRSA) are cytoplasmic. Residues 64–84 (ISMLFLSMMSVAIVAFQWFFW) traverse the membrane as a helical segment. Residues 85–122 (GYSLTFSHEGGPYIGSLANFGLRQTLGRPSSGASSVPD) are Extracellular-facing. Residues 123 to 143 (ILFCVFQGMFAAITPALAIGA) form a helical membrane-spanning segment. The Cytoplasmic portion of the chain corresponds to 144 to 150 (AADRGRM). Residues 151 to 171 (FPCMVFMFLWTSIVYDPIAFW) traverse the membrane as a helical segment. At 172–187 (TWNPNGWLNKLGSYDF) the chain is on the extracellular side. Residues 188 to 208 (AGGSPVHISSGMAALAYSIVI) form a helical membrane-spanning segment. The Cytoplasmic portion of the chain corresponds to 209–223 (GKRCDHGTTKYRPHN). The chain crosses the membrane as a helical span at residues 224-244 (VPHVVLGTVFLWFGWFGFNGG). The Extracellular portion of the chain corresponds to 245–253 (SSAAANMRG). The chain crosses the membrane as a helical span at residues 254-274 (VMAVVVTHLAASVGGIVWCVI). Over 275-281 (DFAKNRH) the chain is Cytoplasmic. Residues 282–302 (WSVVGFCEGAVAGLVAITPGS) form a helical membrane-spanning segment. Residue Gly-303 is a topological domain, extracellular. A helical transmembrane segment spans residues 304–324 (FVPPWAAVVIGALGAVFCYAA). Topologically, residues 325-338 (TYLKKIIRVDDALD) are cytoplasmic. Residues 339-359 (IFAEHGVGGMVGNILTALFAA) traverse the membrane as a helical segment. Residues 360–394 (DYIEALDGSGTAYTGGWITHHYIQLGYQLADTVSC) lie on the Extracellular side of the membrane. The chain crosses the membrane as a helical span at residues 395 to 415 (AAYSFAVSCALLFVMNYIPGL). The Cytoplasmic segment spans residues 416–497 (SLRVSREDEV…AESEAQAPAI (82 aa)). The interval 440–497 (YKDSTDEPPPITTSGVQYTSPTVSDSASNEKEQEHRAQNEAQKEEEYRAESEAQAPAI) is disordered. Polar residues predominate over residues 451-466 (TTSGVQYTSPTVSDSA). Positions 467–490 (SNEKEQEHRAQNEAQKEEEYRAES) are enriched in basic and acidic residues.

The protein belongs to the ammonia transporter channel (TC 1.A.11.2) family.

Its subcellular location is the membrane. In terms of biological role, transporter for ammonium to use as a nitrogen source. Under ammonium limitation acts as an ammonium sensor, generating a signal that leads to pseudohyphal growth. The protein is Ammonium transporter 1 (amt1) of Schizosaccharomyces pombe (strain 972 / ATCC 24843) (Fission yeast).